Consider the following 409-residue polypeptide: Probable glutaryl-CoA dehydrogenase, mitochondrial (409 aa).

110 to 111 provides a ligand contact to substrate; the sequence is RS. Residues 149-152, serine 158, and 184-186 each bind FAD; these read FGLT and WIS. Residue serine 158 coordinates substrate. Residues 261–265 and arginine 268 each bind substrate; that span reads FGCLN. Glutamate 388 serves as the catalytic Proton acceptor. FAD-binding residues include threonine 390 and phenylalanine 408.

The protein belongs to the acyl-CoA dehydrogenase family. FAD serves as cofactor.

Its subcellular location is the mitochondrion matrix. It carries out the reaction glutaryl-CoA + oxidized [electron-transfer flavoprotein] + 2 H(+) = (2E)-butenoyl-CoA + reduced [electron-transfer flavoprotein] + CO2. Its pathway is amino-acid metabolism; lysine degradation. It participates in amino-acid metabolism; tryptophan metabolism. This chain is Probable glutaryl-CoA dehydrogenase, mitochondrial, found in Caenorhabditis elegans.